The primary structure comprises 88 residues: Small ribosomal subunit protein uS17 (88 aa).

This sequence belongs to the universal ribosomal protein uS17 family. Part of the 30S ribosomal subunit.

Its function is as follows. One of the primary rRNA binding proteins, it binds specifically to the 5'-end of 16S ribosomal RNA. The sequence is that of Small ribosomal subunit protein uS17 from Teredinibacter turnerae (strain ATCC 39867 / T7901).